A 433-amino-acid polypeptide reads, in one-letter code: Protein root UVB sensitive 2, chloroplastic (433 aa).

The protein belongs to the RUS1 family. In terms of assembly, interacts (via the DUF647 domain) with RUS1 (via the DUF647 domain). Expressed throughout the plant, with a higher expression near the root apical meristem, in the cortex region of the root elongation zone, in lateral roots and emerging lateral roots. Not detected in extreme root apical meristem or root cap.

It localises to the plastid. Involved in a root UV-B sensing pathway and in the protection against the hypersensitivity to very low-fluence-rate (VLF) UV-B. RSU1 and RUS2 are probably both negative modulators of the same UV-B perception pathway, which when overstimulated in the roots causes a block to postgermination development. Required for polar auxin transport and to maintain the normal levels of PIN proteins in the root. This chain is Protein root UVB sensitive 2, chloroplastic, found in Arabidopsis thaliana (Mouse-ear cress).